A 507-amino-acid polypeptide reads, in one-letter code: ATP synthase subunit alpha, chloroplastic (507 aa).

Residue 170–177 (GDRQTGKT) participates in ATP binding.

The protein belongs to the ATPase alpha/beta chains family. As to quaternary structure, F-type ATPases have 2 components, CF(1) - the catalytic core - and CF(0) - the membrane proton channel. CF(1) has five subunits: alpha(3), beta(3), gamma(1), delta(1), epsilon(1). CF(0) has four main subunits: a, b, b' and c.

It localises to the plastid. It is found in the chloroplast thylakoid membrane. The enzyme catalyses ATP + H2O + 4 H(+)(in) = ADP + phosphate + 5 H(+)(out). Functionally, produces ATP from ADP in the presence of a proton gradient across the membrane. The alpha chain is a regulatory subunit. The protein is ATP synthase subunit alpha, chloroplastic of Citrus sinensis (Sweet orange).